The primary structure comprises 428 residues: Nuclear hormone receptor family member nhr-44 (428 aa).

Positions 21–98 (SEKCLVCFQP…LGMKPDNIQR (78 aa)) form a DNA-binding region, nuclear receptor. 2 consecutive NR C4-type zinc fingers follow at residues 24 to 44 (CLVC…CRAC) and 61 to 86 (CREG…SDKC). In terms of domain architecture, NR LBD spans 181–427 (SLEQLAFGLQ…LSHPEMFQFS (247 aa)).

This sequence belongs to the nuclear hormone receptor family.

It localises to the nucleus. Its function is as follows. Orphan nuclear receptor. The sequence is that of Nuclear hormone receptor family member nhr-44 (nhr-44) from Caenorhabditis elegans.